The primary structure comprises 330 residues: Agamous-like MADS-box protein AGL75 (330 aa).

The 43-residue stretch at 19 to 61 folds into the MADS-box domain; that stretch reads TSLSNRLETIFKKASELCTLCDIEACVIYYGPDGELKTWPKEK.

As to quaternary structure, interacts with MEE14/CBP1.

The protein resides in the nucleus. Its function is as follows. Probable transcription factor that may function in the maintenance of the proper function of the central cell in pollen tube attraction. The protein is Agamous-like MADS-box protein AGL75 of Arabidopsis thaliana (Mouse-ear cress).